The primary structure comprises 396 residues: Phosphoglycerate kinase (396 aa).

Substrate contacts are provided by residues Asp-21 to Asn-23, Arg-37, His-60 to Arg-63, Arg-121, and Arg-154. ATP-binding positions include Lys-205, Gly-296, Glu-327, and Gly-353–Ser-356.

This sequence belongs to the phosphoglycerate kinase family. As to quaternary structure, monomer.

Its subcellular location is the cytoplasm. The enzyme catalyses (2R)-3-phosphoglycerate + ATP = (2R)-3-phospho-glyceroyl phosphate + ADP. The protein operates within carbohydrate degradation; glycolysis; pyruvate from D-glyceraldehyde 3-phosphate: step 2/5. In Anaeromyxobacter sp. (strain Fw109-5), this protein is Phosphoglycerate kinase.